The sequence spans 578 residues: Lipoprotein A (578 aa).

Positions 1-27 are cleaved as a signal peptide; the sequence is MNKKYFKKYSWVLILSTSILAPMTLAS. The N-palmitoyl cysteine moiety is linked to residue Cys-28. The S-diacylglycerol cysteine moiety is linked to residue Cys-28. Disordered stretches follow at residues 35–135 and 172–203; these read KEDK…NTSA and AKDDSKEKSKNSSNLNLKTPVENRQNKNEVKD. The segment covering 41–50 has biased composition (polar residues); that stretch reads NDSSNLSNKT. The segment covering 51–74 has biased composition (basic and acidic residues); the sequence is NKSDPNDHLKDKDKNVSQDNKDST. A compositionally biased stretch (polar residues) spans 75–96; that stretch reads NKAVSNENSQTQSQKTNESSQN. The span at 108 to 119 shows a compositional bias: low complexity; the sequence is ITNQNSSSNTKS. A compositionally biased stretch (basic and acidic residues) spans 172 to 181; that stretch reads AKDDSKEKSK.

Belongs to the M.pulmonis LipAB lipoprotein family.

It is found in the cell membrane. This is Lipoprotein A (lipA) from Mycoplasmopsis pulmonis (strain UAB CTIP) (Mycoplasma pulmonis).